The primary structure comprises 88 residues: Large ribosomal subunit protein uL23c (88 aa).

Belongs to the universal ribosomal protein uL23 family. Part of the 50S ribosomal subunit.

The protein localises to the plastid. Its subcellular location is the chloroplast. In terms of biological role, binds to 23S rRNA. This chain is Large ribosomal subunit protein uL23c (rpl23), found in Spirogyra maxima (Green alga).